A 23-amino-acid chain; its full sequence is PAWLVDCPCVGDDISRLLTRGEK.

Residue Pro-1 is a propeptide. The segment at residues 2–8 (AWLVDCP) is a cross-link (cyclopeptide (Ala-Pro)). Positions 3–7 (WLVDC) form a cross-link, 2'-cysteinyl-6'-hydroxytryptophan sulfoxide (Trp-Cys). Residues 9–23 (CVGDDISRLLTRGEK) constitute a propeptide that is removed on maturation.

This sequence belongs to the MSDIN fungal toxin family. In terms of processing, processed by the macrocyclase-peptidase enzyme POPB to yield a toxic cyclic heptapeptide. POPB first removes 10 residues from the N-terminus. Conformational trapping of the remaining peptide forces the enzyme to release this intermediate rather than proceed to macrocyclization. The enzyme rebinds the remaining peptide in a different conformation and catalyzes macrocyclization of the N-terminal 7 residues.

Functionally, major toxin that belongs to the bicyclic heptapeptides called phallotoxins. Although structurally related to amatoxins, phallotoxins have a different mode of action, which is the stabilization of F-actin. Phallotoxins are poisonous when administered parenterally, but not orally because of poor absorption. The sequence is that of Phallacidin proprotein from Amanita rimosa.